The chain runs to 264 residues: Ribosome-recycling factor, mitochondrial (264 aa).

It belongs to the RRF family.

Its subcellular location is the mitochondrion. In terms of biological role, necessary for protein synthesis in mitochondria. Functions as a ribosome recycling factor in mitochondria. This is Ribosome-recycling factor, mitochondrial (RRF1) from Yarrowia lipolytica (strain CLIB 122 / E 150) (Yeast).